A 291-amino-acid chain; its full sequence is FFTIFLDLNMFLALGVNCWIDNTRVVYNRSSGRMSNAPCVQIRVPGFGKTYSVEYLDDNKLAGYMHTLVQNLVNNGYVRDETVLAAPYDWRLEPSQQEEYYQKLAGLVEEMHAAYGKPVFLIGHSVGCLHVLYFNQGIPIMSSIKLREEQRITTTSPWMFPARRVWPEDHVFISTPNFNYTGQDFKRFFEDLYFEEGWYMWLQSRDLLAGLPAPGVEVYCLYGVGLPTPSTYIYDHSFPYKDPVAALYEDGDDTVATRSTELCGQVQGSQSQPVHWLPMNWTEQLNMLFSN.

N-linked (GlcNAc...) asparagine glycosylation is present at Asn28. Ser125 acts as the Nucleophile in catalysis. A glycan (N-linked (GlcNAc...) asparagine) is linked at Asn179. A disulfide bridge links Cys220 with Cys263. Catalysis depends on Asp252, which acts as the Charge relay system. Asn280 is a glycosylation site (N-linked (GlcNAc...) asparagine).

This sequence belongs to the AB hydrolase superfamily. Lipase family.

It is found in the secreted. The catalysed reaction is a sterol + a 1,2-diacyl-sn-glycero-3-phosphocholine = a sterol ester + a 1-acyl-sn-glycero-3-phosphocholine. Its activity is regulated as follows. APOA1 is the most potent activator in plasma. Also activated by APOE, APOC1 and APOA4. Its function is as follows. Central enzyme in the extracellular metabolism of plasma lipoproteins. Synthesized mainly in the liver and secreted into plasma where it converts cholesterol and phosphatidylcholines (lecithins) to cholesteryl esters and lysophosphatidylcholines on the surface of high and low density lipoproteins (HDLs and LDLs). The cholesterol ester is then transported back to the liver. Has a preference for plasma 16:0-18:2 or 18:O-18:2 phosphatidylcholines. Also produced in the brain by primary astrocytes, and esterifies free cholesterol on nascent APOE-containing lipoproteins secreted from glia and influences cerebral spinal fluid (CSF) APOE- and APOA1 levels. Together with APOE and the cholesterol transporter ABCA1, plays a key role in the maturation of glial-derived, nascent lipoproteins. Required for remodeling high-density lipoprotein particles into their spherical forms. In Myodes glareolus (Bank vole), this protein is Phosphatidylcholine-sterol acyltransferase (LCAT).